Reading from the N-terminus, the 2236-residue chain is uncharacterized protein (2236 aa).

2 Spectrin repeats span residues 46 to 146 and 238 to 335; these read QVYL…RQLE and QKFV…TDIE. Coiled coils occupy residues 496-541 and 603-631; these read VVEQ…TVNS and DDQQKNMANEELRKTYENLKKIEMEVGRQ. Spectrin repeat units lie at residues 839-949, 1048-1146, 1261-1361, 1367-1459, and 1562-1667; these read YEYD…KTLK, KKLE…KRME, LGAE…VDLN, ILID…KSLA, and QKVV…NRLE. Residues 1835–1869 are a coiled coil; the sequence is QNSTDAEKKLSLVSERLNALKKQLDLLAEKIAVDD. EF-hand domains are found at residues 2104–2139 and 2141–2176; these read KQLHEFELAFDYFDRERNGWLDYKHFELCLKSQGYN and SAENTLKETMTLLDPSTTGHIQKHDYVRYMVKHETT. Residues Asp2154, Ser2156, Thr2158, His2160, and Asp2165 each coordinate Ca(2+).

This sequence belongs to the spectrin family.

This is an uncharacterized protein from Caenorhabditis elegans.